The following is an 85-amino-acid chain: Inhibitor of dGTPase (85 aa).

As to quaternary structure, interacts with host dGTPase/dgt.

In terms of biological role, plays a role in increasing the intracellular pool of dGTP. Interacts with and inhibits host dGTPase/dgt. The complex made of the host dGTPase and gene 1.2 protein creates a GTP-binding site of high affinity. Subsequent binding of GTP to the enzyme-inhibitor complex inhibits its dissociation. This is Inhibitor of dGTPase from Escherichia coli (Bacteriophage T7).